A 426-amino-acid chain; its full sequence is GTPase HflX (426 aa).

The Hflx-type G domain maps to 198 to 365 (PTVSLVGYTN…ALTERLSGEV (168 aa)). GTP contacts are provided by residues 204–211 (GYTNAGKS), 229–233 (FATLD), 251–254 (DTVG), 317–320 (NKID), and 343–345 (SAQ). Mg(2+)-binding residues include Ser-211 and Thr-231.

It belongs to the TRAFAC class OBG-HflX-like GTPase superfamily. HflX GTPase family. As to quaternary structure, monomer. Associates with the 50S ribosomal subunit. This interaction occurs in the presence of GTP, GDP, ATP or ADP, but not in their absence. Requires Mg(2+) as cofactor.

Its subcellular location is the cytoplasm. Its activity is regulated as follows. Intrinsic GTPase activity is very slow and can be stimulated by the presence of 50S ribosomal subunits or 70S ribosomes. GTPase activity is inhibited by ATP. Functionally, GTPase that associates with the 50S ribosomal subunit and may have a role during protein synthesis or ribosome biogenesis. In vitro, also exhibits ATPase activity. This is GTPase HflX from Escherichia coli (strain K12).